The sequence spans 105 residues: N(4)-acetylcytidine amidohydrolase (105 aa).

Positions 7 to 93 constitute an ASCH domain; that stretch reads TFFERFEHDI…VIAEIYPGLE (87 aa). Catalysis depends on K21, which acts as the Proton acceptor. T24 (nucleophile) is an active-site residue. The active-site Proton donor is the E74.

This sequence belongs to the N(4)-acetylcytidine amidohydrolase family.

The catalysed reaction is N(4)-acetylcytidine + H2O = cytidine + acetate + H(+). It carries out the reaction N(4)-acetyl-2'-deoxycytidine + H2O = 2'-deoxycytidine + acetate + H(+). It catalyses the reaction N(4)-acetylcytosine + H2O = cytosine + acetate + H(+). Functionally, catalyzes the hydrolysis of N(4)-acetylcytidine (ac4C). This is N(4)-acetylcytidine amidohydrolase from Shewanella baltica (strain OS195).